The chain runs to 186 residues: UPF0397 protein LCABL_04350 (186 aa).

The next 5 helical transmembrane spans lie at 12 to 32 (VVAI…AVIP), 45 to 65 (GFLG…IGFL), 77 to 97 (TPWW…GLFW), 112 to 132 (IVSF…LIAP), and 150 to 170 (GIVS…ILLV).

This sequence belongs to the UPF0397 family.

The protein localises to the cell membrane. This Lacticaseibacillus casei (strain BL23) (Lactobacillus casei) protein is UPF0397 protein LCABL_04350.